A 373-amino-acid chain; its full sequence is Zinc finger CCCH domain-containing protein 15 homolog (373 aa).

The segment at 1 to 27 (MPPKQAQSKKTVEKEKKKKVEDKTFGL) is disordered. The segment covering 10 to 25 (KTVEKEKKKKVEDKTF) has biased composition (basic and acidic residues). 2 C3H1-type zinc fingers span residues 95–123 (DPKS…HDLA) and 167–205 (KPTA…HCLP). Positions 252–326 (KEEKRLQKEK…ALANQINTSL (75 aa)) form a coiled coil. A disordered region spans residues 325 to 373 (SLFTDGGVLPSDDDDDDDDDDDDDEDGDDEEEDDDEEEGEYEEEEASDE). Over residues 335 to 373 (SDDDDDDDDDDDDDEDGDDEEEDDDEEEGEYEEEEASDE) the composition is skewed to acidic residues.

It belongs to the ZC3H15/TMA46 family.

The chain is Zinc finger CCCH domain-containing protein 15 homolog from Dictyostelium discoideum (Social amoeba).